Here is a 70-residue protein sequence, read N- to C-terminus: Protein SlyX homolog (70 aa).

This sequence belongs to the SlyX family.

The chain is Protein SlyX homolog from Shewanella loihica (strain ATCC BAA-1088 / PV-4).